A 431-amino-acid chain; its full sequence is Serine--tRNA ligase (431 aa).

A disordered region spans residues 41 to 66 (QSRTQELQAERNARSKSIGEAARRGE). Residue 240–242 (TSE) coordinates L-serine. An ATP-binding site is contributed by 271–273 (RSE). Glu294 contacts L-serine. 358-361 (EISS) lines the ATP pocket. Residue Ser392 participates in L-serine binding.

It belongs to the class-II aminoacyl-tRNA synthetase family. Type-1 seryl-tRNA synthetase subfamily. As to quaternary structure, homodimer. The tRNA molecule binds across the dimer.

The protein localises to the cytoplasm. The catalysed reaction is tRNA(Ser) + L-serine + ATP = L-seryl-tRNA(Ser) + AMP + diphosphate + H(+). It carries out the reaction tRNA(Sec) + L-serine + ATP = L-seryl-tRNA(Sec) + AMP + diphosphate + H(+). It functions in the pathway aminoacyl-tRNA biosynthesis; selenocysteinyl-tRNA(Sec) biosynthesis; L-seryl-tRNA(Sec) from L-serine and tRNA(Sec): step 1/1. Its function is as follows. Catalyzes the attachment of serine to tRNA(Ser). Is also able to aminoacylate tRNA(Sec) with serine, to form the misacylated tRNA L-seryl-tRNA(Sec), which will be further converted into selenocysteinyl-tRNA(Sec). The chain is Serine--tRNA ligase from Aeromonas salmonicida (strain A449).